A 447-amino-acid chain; its full sequence is Dirigent protein 10 (447 aa).

The first 21 residues, 1 to 21, serve as a signal peptide directing secretion; sequence MAGQKILSLLVIALVVTFAAA. Gly residues predominate over residues 74-85; that stretch reads SGSTGSGLGAGT. The disordered stretch occupies residues 74–123; the sequence is SGSTGSGLGAGTGSIPSSGSGPGLLPTASSVPGSLAGGGSGSLPTTGSAT. Residues 86–107 are compositionally biased toward low complexity; that stretch reads GSIPSSGSGPGLLPTASSVPGS.

Belongs to the plant dirigent protein family. In terms of assembly, homodimer. As to expression, in roots, mostly detected in root endodermis and quiescent center, and, to a lower extent, in root stele and cortex. Expressed in root vascular cylinder, flowers, siliques, cotyledon and leaf veins, and leaf margins. Present in the basal region of rosette leaf trichomes and in developing xylem.

The protein localises to the secreted. It localises to the extracellular space. The protein resides in the apoplast. Dirigent proteins impart stereoselectivity on the phenoxy radical-coupling reaction, yielding optically active lignans from two molecules of coniferyl alcohol in the biosynthesis of lignans, flavonolignans, and alkaloids and thus plays a central role in plant secondary metabolism. Regulates suberin accumulation in roots. This Arabidopsis thaliana (Mouse-ear cress) protein is Dirigent protein 10 (DIR10).